A 310-amino-acid polypeptide reads, in one-letter code: ADP-L-glycero-D-manno-heptose-6-epimerase (310 aa).

NADP(+) contacts are provided by residues 10-11 (FI), 31-32 (DN), K38, K53, 75-79 (EGACS), and N92. Y140 functions as the Proton acceptor in the catalytic mechanism. K144 is a binding site for NADP(+). N169 contributes to the substrate binding site. The NADP(+) site is built by V170 and K178. The active-site Proton acceptor is K178. Substrate contacts are provided by residues S180, H187, 201–204 (FEGS), R209, and Y272.

This sequence belongs to the NAD(P)-dependent epimerase/dehydratase family. HldD subfamily. In terms of assembly, homopentamer. NADP(+) serves as cofactor.

The catalysed reaction is ADP-D-glycero-beta-D-manno-heptose = ADP-L-glycero-beta-D-manno-heptose. It functions in the pathway nucleotide-sugar biosynthesis; ADP-L-glycero-beta-D-manno-heptose biosynthesis; ADP-L-glycero-beta-D-manno-heptose from D-glycero-beta-D-manno-heptose 7-phosphate: step 4/4. In terms of biological role, catalyzes the interconversion between ADP-D-glycero-beta-D-manno-heptose and ADP-L-glycero-beta-D-manno-heptose via an epimerization at carbon 6 of the heptose. In Citrobacter koseri (strain ATCC BAA-895 / CDC 4225-83 / SGSC4696), this protein is ADP-L-glycero-D-manno-heptose-6-epimerase.